A 61-amino-acid polypeptide reads, in one-letter code: Truncated 3-beta hydroxy-5-ene steroid dehydrogenase homolog (61 aa).

The protein belongs to the 3-beta-HSD family.

This Variola virus (isolate Human/India/Ind3/1967) (VARV) protein is Truncated 3-beta hydroxy-5-ene steroid dehydrogenase homolog.